Here is a 542-residue protein sequence, read N- to C-terminus: Chondroitin sulfate N-acetylgalactosaminyltransferase 2 (542 aa).

Residues 1-11 (MPRRGLILHTR) lie on the Cytoplasmic side of the membrane. A helical; Signal-anchor for type II membrane protein transmembrane segment spans residues 12 to 32 (THWLLLGLALLCSLVLFMYLL). The Lumenal segment spans residues 33 to 542 (ECAPQTDGNA…AYRTNSEAVG (510 aa)). An N-linked (GlcNAc...) asparagine glycan is attached at asparagine 41. Positions 59-105 (ALLQEQEEHYQTRATSLKRQIAQLKQELQEMSEKMRSLQERRNVGAN) form a coiled coil. The N-linked (GlcNAc...) asparagine glycan is linked to asparagine 333. A divalent metal cation-binding residues include aspartate 369 and histidine 486.

This sequence belongs to the chondroitin N-acetylgalactosaminyltransferase family. As to expression, ubiquitous.

It is found in the golgi apparatus. The protein localises to the golgi stack membrane. The catalysed reaction is 3-O-(beta-D-GlcA-(1-&gt;3)-beta-D-Gal-(1-&gt;3)-beta-D-Gal-(1-&gt;4)-beta-D-Xyl)-L-seryl-[protein] + UDP-N-acetyl-alpha-D-galactosamine = 3-O-(beta-D-GalNAc-(1-&gt;4)-beta-D-GlcA-(1-&gt;3)-beta-D-Gal-(1-&gt;3)-beta-D-Gal-(1-&gt;4)-beta-D-Xyl)-L-seryl-[protein] + UDP + H(+). In terms of biological role, transfers 1,4-N-acetylgalactosamine (GalNAc) from UDP-GalNAc to the non-reducing end of glucuronic acid (GlcUA). Required for addition of the first GalNAc to the core tetrasaccharide linker and for elongation of chondroitin chains. This Homo sapiens (Human) protein is Chondroitin sulfate N-acetylgalactosaminyltransferase 2 (CSGALNACT2).